We begin with the raw amino-acid sequence, 80 residues long: Putative membrane protein insertion efficiency factor (80 aa).

Belongs to the UPF0161 family.

It is found in the cell membrane. Functionally, could be involved in insertion of integral membrane proteins into the membrane. This is Putative membrane protein insertion efficiency factor from Corynebacterium jeikeium (strain K411).